The following is a 279-amino-acid chain: Protease HtpX homolog (279 aa).

The next 2 helical transmembrane spans lie at 4–24 (IFLF…VLAV) and 34–54 (GSLL…SLLM). H140 contacts Zn(2+). The active site involves E141. H144 provides a ligand contact to Zn(2+). A run of 2 helical transmembrane segments spans residues 155-175 (LIQG…ANLI) and 189-209 (FLVS…IVMW). E215 contributes to the Zn(2+) binding site.

Belongs to the peptidase M48B family. The cofactor is Zn(2+).

Its subcellular location is the cell inner membrane. This is Protease HtpX homolog from Neisseria gonorrhoeae (strain ATCC 700825 / FA 1090).